Here is a 359-residue protein sequence, read N- to C-terminus: MTIYNFSAGPAVLPKDVLQQVQAELVDWHGSGMSVMEMSHRGKEFMGIAAEAEADLRELMAIPANYKVLFLQGGASSQFAMVPMNLLRGKASADYLNTGEWSKKAIKEAKKYAAVNVVASSEDRNFSYAPTQDRWKLDPNAAYVHYTPNETIGGVEIFWTPEAGDVPIAADMSSTILSRPIDVSKYGVIYAGAQKNIGPAGLTIVIVREDLMGETVAGTPTMFDYKIHADNESMYNTPATFAMYTAGLVFKWLKARGGLAGMEKINREKAALLYEALDATDFYASPVAKDNRSLMNVPFTLKDAALDEAFLKGAKERGLLQLKGHRSVGGMRASIYNAMPTEGVKALVDYLHAFEKNHG.

Arg-41 contributes to the L-glutamate binding site. Residues 75-76 (AS), Trp-101, Thr-151, Asp-171, and Gln-194 contribute to the pyridoxal 5'-phosphate site. The residue at position 195 (Lys-195) is an N6-(pyridoxal phosphate)lysine. 236-237 (NT) lines the pyridoxal 5'-phosphate pocket.

This sequence belongs to the class-V pyridoxal-phosphate-dependent aminotransferase family. SerC subfamily. In terms of assembly, homodimer. Pyridoxal 5'-phosphate is required as a cofactor.

The protein localises to the cytoplasm. It carries out the reaction O-phospho-L-serine + 2-oxoglutarate = 3-phosphooxypyruvate + L-glutamate. The catalysed reaction is 4-(phosphooxy)-L-threonine + 2-oxoglutarate = (R)-3-hydroxy-2-oxo-4-phosphooxybutanoate + L-glutamate. Its pathway is amino-acid biosynthesis; L-serine biosynthesis; L-serine from 3-phospho-D-glycerate: step 2/3. The protein operates within cofactor biosynthesis; pyridoxine 5'-phosphate biosynthesis; pyridoxine 5'-phosphate from D-erythrose 4-phosphate: step 3/5. Functionally, catalyzes the reversible conversion of 3-phosphohydroxypyruvate to phosphoserine and of 3-hydroxy-2-oxo-4-phosphonooxybutanoate to phosphohydroxythreonine. The chain is Phosphoserine aminotransferase from Thiobacillus denitrificans (strain ATCC 25259 / T1).